Reading from the N-terminus, the 830-residue chain is Cadherin-16 (830 aa).

The first 21 residues, 1–21, serve as a signal peptide directing secretion; sequence MISARPWLLYLSVIQAFTTEA. Residues 22 to 788 lie on the Extracellular side of the membrane; sequence QPAESLHTEV…MKGMPTKLSA (767 aa). Cadherin domains lie at 27–128, 133–237, 244–338, 343–451, 457–566, and 571–667; these read LHTE…VPQF, YRAQ…SIVE, EPVH…APVC, PTVN…APEF, GPVT…PLKL, and YETS…VPAL. N-linked (GlcNAc...) asparagine glycans are attached at residues Asn519, Asn604, and Asn724. The ectodomain G stretch occupies residues 668–788; the sequence is TLSAGPSRHL…MKGMPTKLSA (121 aa). A helical transmembrane segment spans residues 789 to 809; the sequence is VGVLLGTLAAIGFILILVFTH. The Cytoplasmic segment spans residues 810–830; sequence LALARKDLDQPADSVPLKAAV. Residue Ser823 is modified to Phosphoserine.

In terms of tissue distribution, kidney specific.

The protein resides in the cell membrane. Its function is as follows. Cadherins are calcium-dependent cell adhesion proteins. They preferentially interact with themselves in a homophilic manner in connecting cells; cadherins may thus contribute to the sorting of heterogeneous cell types. The protein is Cadherin-16 (Cdh16) of Mus musculus (Mouse).